The primary structure comprises 149 residues: Glutamyl-tRNA(Gln) amidotransferase subunit C, mitochondrial (149 aa).

The N-terminal 25 residues, 1–25 (MNHLHRLFRITQVDRPVLLAITRRL), are a transit peptide targeting the mitochondrion.

It belongs to the GatC family. Subunit of the heterotrimeric GatCAB amidotransferase (AdT) complex, composed of A, B and C subunits.

The protein localises to the mitochondrion. The enzyme catalyses L-glutamyl-tRNA(Gln) + L-glutamine + ATP + H2O = L-glutaminyl-tRNA(Gln) + L-glutamate + ADP + phosphate + H(+). In terms of biological role, allows the formation of correctly charged Gln-tRNA(Gln) through the transamidation of misacylated Glu-tRNA(Gln) in the mitochondria. The reaction takes place in the presence of glutamine and ATP through an activated gamma-phospho-Glu-tRNA(Gln). In Branchiostoma floridae (Florida lancelet), this protein is Glutamyl-tRNA(Gln) amidotransferase subunit C, mitochondrial.